Consider the following 185-residue polypeptide: Ribosome-recycling factor (185 aa).

It belongs to the RRF family.

The protein localises to the cytoplasm. Functionally, responsible for the release of ribosomes from messenger RNA at the termination of protein biosynthesis. May increase the efficiency of translation by recycling ribosomes from one round of translation to another. This chain is Ribosome-recycling factor, found in Haemophilus influenzae (strain 86-028NP).